The primary structure comprises 122 residues: Protein preY, mitochondrial (122 aa).

The transit peptide at 1 to 40 (MLAVRAWGRTYNTLVQRKLNAACPTGALPAVTLRPLHCSL) directs the protein to the mitochondrion. Residues 56 to 102 (DPTLLQFLVCPLSRKSLRYEESTNELINDELGIAYPIVDGIPNMIPQ) form the TRM112 domain.

Belongs to the PREY family.

It is found in the mitochondrion. In mitochondria, S-adenosylmethionine-dependent methyltransferase chaperone that supports both coenzyme Q biosynthesis and NADH:ubiquinone oxidoreductase complex (complex I, MT-ND1) assembly. This chain is Protein preY, mitochondrial (pyurf), found in Xenopus tropicalis (Western clawed frog).